Here is a 638-residue protein sequence, read N- to C-terminus: ATP-dependent zinc metalloprotease FtsH (638 aa).

The Cytoplasmic portion of the chain corresponds to 1–4 (MNNQ). Residues 5–25 (GKNIIVWAVIFVFVILLFNVF) traverse the membrane as a helical segment. Residues 26–103 (QSDGLLSSKN…VVPPETRMNT (78 aa)) are Periplasmic-facing. A helical membrane pass occupies residues 104–124 (FLSFLISWFPMLLLIGVWVFF). The Cytoplasmic portion of the chain corresponds to 125–638 (MRQMHGGGKA…PIKAKKEDKS (514 aa)). An ATP-binding site is contributed by 195 to 202 (GPPGTGKT). A Zn(2+)-binding site is contributed by histidine 417. The active site involves glutamate 418. Positions 421 and 495 each coordinate Zn(2+). The disordered stretch occupies residues 523–544 (SASEDMYTNRNSSSDRSESTSE).

The protein in the central section; belongs to the AAA ATPase family. This sequence in the C-terminal section; belongs to the peptidase M41 family. In terms of assembly, homohexamer. Zn(2+) serves as cofactor.

Its subcellular location is the cell inner membrane. Acts as a processive, ATP-dependent zinc metallopeptidase for both cytoplasmic and membrane proteins. Plays a role in the quality control of integral membrane proteins. In Rickettsia bellii (strain RML369-C), this protein is ATP-dependent zinc metalloprotease FtsH.